A 339-amino-acid polypeptide reads, in one-letter code: Deoxyguanosinetriphosphate triphosphohydrolase-like protein (339 aa).

Residues 75-186 (RLTHTLEVAQ…VQISDKIAYI (112 aa)) enclose the HD domain.

This sequence belongs to the dGTPase family. Type 2 subfamily.

This is Deoxyguanosinetriphosphate triphosphohydrolase-like protein from Caldanaerobacter subterraneus subsp. tengcongensis (strain DSM 15242 / JCM 11007 / NBRC 100824 / MB4) (Thermoanaerobacter tengcongensis).